The primary structure comprises 512 residues: FAD-dependent monooxygenase prx3 (512 aa).

The signal sequence occupies residues 1–19 (MLSLKAFLALSLSIHLSQG). Residues 63 to 235 (CQTTPTCVFA…TRFDLATFSV (173 aa)) form the FAD-binding PCMH-type domain. H100 is subject to Pros-8alpha-FAD histidine. N197, N281, N307, N329, N361, and N477 each carry an N-linked (GlcNAc...) asparagine glycan.

The protein belongs to the oxygen-dependent FAD-linked oxidoreductase family.

The protein operates within sesquiterpene biosynthesis. Functionally, FAD-dependent monooxygenase; part of the gene cluster that mediates the biosynthesis of PR-toxin, a bicyclic sesquiterpene belonging to the eremophilane class and acting as a mycotoxin. The first step of the pathway is catalyzed by the aristolochene synthase which performs the cyclization of trans,trans-farnesyl diphosphate (FPP) to the bicyclic sesquiterpene aristolochene. Following the formation of aristolochene, the non-oxygenated aristolochene is converted to the trioxygenated intermediate eremofortin B, via 7-epi-neopetasone. This conversion appears to involve three enzymes, a hydroxysterol oxidase-like enzyme, the quinone-oxidase prx3 that forms the quinone-type-structure in the bicyclic nucleus of aristolochene with the C8-oxo group and the C-3 hydroxyl group, and the P450 monooxygenase ORF6 that introduces the epoxide at the double bond between carbons 1 and 2. No monoxy or dioxy-intermediates have been reported to be released to the broth, so these three early oxidative reactions may be coupled together. Eremofortin B is further oxidized by another P450 monooxygenase, that introduces a second epoxide between carbons 7 and 11 prior to acetylation to eremofortin A by the acetyltransferase ORF8. The second epoxidation may be performed by a second P450 monooxygenase. After the acetylation step, eremofortin A is converted to eremofortin C and then to PR-toxin. First the conversion of eremofortin A to eremofortin C proceeds by oxidation of the side chain of the molecule at C-12 and is catalyzed by the short-chain oxidoreductase prx1. The cytochrome P450 monooxygenase ORF6 is probably also involved in this step. The primary alcohol formed at C-12 is finally oxidized by the short-chain alcohol dehydrogenase prx4 that forms PR-toxin. The polypeptide is FAD-dependent monooxygenase prx3 (Penicillium roqueforti (strain FM164)).